A 467-amino-acid polypeptide reads, in one-letter code: D-hydantoinase (467 aa).

Zn(2+)-binding residues include His65, His67, and Lys156. Lys156 is subject to N6-carboxylysine. Residue Tyr161 coordinates substrate. Zn(2+)-binding residues include His189 and His245. Residue Ser294 coordinates substrate. Asp321 is a Zn(2+) binding site. Residue Asn343 participates in substrate binding.

Belongs to the metallo-dependent hydrolases superfamily. Hydantoinase/dihydropyrimidinase family. Homotetramer. It depends on Zn(2+) as a cofactor. In terms of processing, carboxylation allows a single lysine to coordinate two zinc ions.

Functionally, catalyzes the stereospecific hydrolysis of the cyclic amide bond of D-hydantoin derivatives. This chain is D-hydantoinase (hyuA), found in Streptomyces coelicolor (strain ATCC BAA-471 / A3(2) / M145).